A 1500-amino-acid polypeptide reads, in one-letter code: Rho GTPase-activating protein 35 (1500 aa).

Residues 1 to 266 (MMMARKQDVR…IPYFEALKQQ (266 aa)) form a has GTPase activity, required for proper localization region. GTP contacts are provided by residues Lys28, 33–37 (IGKSC), Leu52, Ser56, 95–97 (EQT), 201–203 (KCD), and 229–231 (SAR). FF domains are found at residues 270 to 327 (IATA…HIHR), 368 to 422 (KLLE…HLEK), 429 to 483 (RAEM…HQKQ), and 485 to 550 (IDKA…HIHF). Phosphotyrosine is present on Tyr308. A Phosphoserine modification is found at Ser589. One can recognise a pG1 pseudoGTPase domain in the interval 592–767 (DPNIDRINLV…LLDSKRNLNL (176 aa)). Residues Ser770 and Ser773 each carry the phosphoserine modification. A pG2 pseudoGTPase domain is found at 783-947 (RIVMCLMCGD…FKDVVDKKNI (165 aa)). Ser970, Ser975, Ser985, Ser1002, and Ser1073 each carry phosphoserine. The interval 970 to 989 (SPRAGSPLCNSNLQDSEEDI) is disordered. The segment at 1058-1090 (SYLDQGHRDGQRKSVSSSTWLPPDGFDPSDYAE) is disordered. At Tyr1088 the chain carries Phosphotyrosine. Tyr1106 bears the Phosphotyrosine; by ABL2 and PTK6 mark. Polar residues predominate over residues 1125-1142 (KAQSNGSGNGSDSEMDTS). The interval 1125–1147 (KAQSNGSGNGSDSEMDTSSLERG) is disordered. A phosphoserine mark is found at Ser1135, Ser1143, Ser1151, Ser1177, Ser1180, and Ser1222. Residues 1178 to 1208 (VGSDDELGPIRKKEEDQASQGYKGDNAVIPY) are disordered. The tract at residues 1214–1237 (PRRRNILRSLRRNTKKPKPKPRPS) is required for phospholipid binding and regulation of the substrate preference. A Phosphothreonine modification is found at Thr1227. Ser1237 is modified (phosphoserine). The Rho-GAP domain occupies 1250 to 1437 (VPLTTVVTPE…LFIQQCPFFF (188 aa)). A disordered region spans residues 1444–1500 (EPPGATPSSPSAVASTVPFLTSTPVTSQPSPPQSPPPTPQSPMQALLPSQLQAEHTL). Residues 1449–1471 (TPSSPSAVASTVPFLTSTPVTSQ) show a composition bias toward low complexity. The segment covering 1472-1483 (PSPPQSPPPTPQ) has biased composition (pro residues). 2 positions are modified to phosphoserine: Ser1473 and Ser1477. Residue Thr1481 is modified to Phosphothreonine. At Ser1484 the chain carries Phosphoserine. Residues 1490-1500 (LPSQLQAEHTL) are compositionally biased toward polar residues.

In terms of assembly, interacts with RASA1. Interacts with the general transcription factor GTF2I, the interaction sequesters GTF2I in the cytoplasm. In terms of processing, phosphorylation of Tyr-1106 by PTK6 promotes the association with RASA1, inactivating RHOA while activating RAS. Phosphorylation at Tyr-308 by PDGFRA inhibits binding to GTF2I. Phosphorylated by PRKCA at Ser-1222 and Thr-1227, induces relocalization from the cytoplasm to regions of plasma membrane ruffling and prevents the binding and substrate specificity regulation by phospholipids. In brain, phosphorylated by FYN and SRC. During focal adhesion formation, phosphorylated by MAPK1 and MAPK3 at the C-terminal region, probably at Ser-1452, Ser-1477, Thr-1481 and Ser-1484. Phosphorylation by MAPK1 and MAPK3 inhibits GAP function and localizes ARGHAP35 away from newly forming focal adhesions and stress fibers in cells spreading on fibronectin. Phosphorylation at Ser-1477 and Thr-1481 by GSK3B requires priming by MAPK and inhibits RhoGAP activity and modulates polarized cell migration. Strongly expressed in retina (photoreceptor layer) and brain. Expression is maximal in the occipital, frontal, temporal lobe and also the cerebellum. Medium expression in the medulla and also in kidney, lung, liver, heart and spleen.

The protein resides in the cytoplasm. Its subcellular location is the cytoskeleton. The protein localises to the cilium basal body. It localises to the nucleus. It is found in the cell membrane. In terms of biological role, rho GTPase-activating protein (GAP). Binds several acidic phospholipids which inhibits the Rho GAP activity to promote the Rac GAP activity. This binding is inhibited by phosphorylation by PRKCA. Involved in cell differentiation as well as cell adhesion and migration, plays an important role in retinal tissue morphogenesis, neural tube fusion, midline fusion of the cerebral hemispheres and mammary gland branching morphogenesis. Transduces signals from p21-ras to the nucleus, acting via the ras GTPase-activating protein (GAP). Transduces SRC-dependent signals from cell-surface adhesion molecules, such as laminin, to promote neurite outgrowth. Regulates axon outgrowth, guidance and fasciculation. Modulates Rho GTPase-dependent F-actin polymerization, organization and assembly, is involved in polarized cell migration and in the positive regulation of ciliogenesis and cilia elongation. During mammary gland development, is required in both the epithelial and stromal compartments for ductal outgrowth. Represses transcription of the glucocorticoid receptor by binding to the cis-acting regulatory sequence 5'-GAGAAAAGAAACTGGAGAAACTC-3'; this function is however unclear and would need additional experimental evidences. The sequence is that of Rho GTPase-activating protein 35 from Canis lupus familiaris (Dog).